The following is an 83-amino-acid chain: uncharacterized protein (83 aa).

The segment at arginine 40–glycine 65 is disordered. The span at asparagine 54–glycine 65 shows a compositional bias: polar residues.

This is an uncharacterized protein from Dictyostelium discoideum (Social amoeba).